The chain runs to 317 residues: 4-hydroxy-3-methylbut-2-enyl diphosphate reductase (317 aa).

Cys-12 lines the [4Fe-4S] cluster pocket. (2E)-4-hydroxy-3-methylbut-2-enyl diphosphate contacts are provided by His-41 and His-74. 2 residues coordinate dimethylallyl diphosphate: His-41 and His-74. Residues His-41 and His-74 each contribute to the isopentenyl diphosphate site. Residue Cys-97 participates in [4Fe-4S] cluster binding. (2E)-4-hydroxy-3-methylbut-2-enyl diphosphate is bound at residue His-125. A dimethylallyl diphosphate-binding site is contributed by His-125. Residue His-125 coordinates isopentenyl diphosphate. The active-site Proton donor is the Glu-127. Thr-168 is a binding site for (2E)-4-hydroxy-3-methylbut-2-enyl diphosphate. [4Fe-4S] cluster is bound at residue Cys-198. Residues Ser-226, Ser-227, Asn-228, and Ser-270 each contribute to the (2E)-4-hydroxy-3-methylbut-2-enyl diphosphate site. The dimethylallyl diphosphate site is built by Ser-226, Ser-227, Asn-228, and Ser-270. Isopentenyl diphosphate is bound by residues Ser-226, Ser-227, Asn-228, and Ser-270.

Belongs to the IspH family. Homodimer. It depends on [4Fe-4S] cluster as a cofactor.

The catalysed reaction is isopentenyl diphosphate + 2 oxidized [2Fe-2S]-[ferredoxin] + H2O = (2E)-4-hydroxy-3-methylbut-2-enyl diphosphate + 2 reduced [2Fe-2S]-[ferredoxin] + 2 H(+). It catalyses the reaction dimethylallyl diphosphate + 2 oxidized [2Fe-2S]-[ferredoxin] + H2O = (2E)-4-hydroxy-3-methylbut-2-enyl diphosphate + 2 reduced [2Fe-2S]-[ferredoxin] + 2 H(+). The protein operates within isoprenoid biosynthesis; dimethylallyl diphosphate biosynthesis; dimethylallyl diphosphate from (2E)-4-hydroxy-3-methylbutenyl diphosphate: step 1/1. It participates in isoprenoid biosynthesis; isopentenyl diphosphate biosynthesis via DXP pathway; isopentenyl diphosphate from 1-deoxy-D-xylulose 5-phosphate: step 6/6. Catalyzes the conversion of 1-hydroxy-2-methyl-2-(E)-butenyl 4-diphosphate (HMBPP) into a mixture of isopentenyl diphosphate (IPP) and dimethylallyl diphosphate (DMAPP). Acts in the terminal step of the DOXP/MEP pathway for isoprenoid precursor biosynthesis. In Yersinia pseudotuberculosis serotype O:1b (strain IP 31758), this protein is 4-hydroxy-3-methylbut-2-enyl diphosphate reductase.